The sequence spans 155 residues: Protein Smg homolog (155 aa).

It belongs to the Smg family.

The protein is Protein Smg homolog of Methylococcus capsulatus (strain ATCC 33009 / NCIMB 11132 / Bath).